A 496-amino-acid polypeptide reads, in one-letter code: Apolipoprotein N-acyltransferase (496 aa).

The next 6 helical transmembrane spans lie at 6-26, 50-70, 77-97, 114-134, 148-168, and 183-203; these read IICL…FFIP, FGYL…SIGV, FWWA…FFIS, LIFC…LTGL, ILIQ…VIYI, and LKIL…YGAV. A CN hydrolase domain is found at 220 to 464; it reads VQPSIPQTAK…QGLIPQKLTT (245 aa). The Proton acceptor role is filled by glutamate 259. Lysine 322 is an active-site residue. The active-site Nucleophile is the cysteine 372. A helical membrane pass occupies residues 474-494; it reads FAMLLSIVFIILIHYLLSLIF.

Belongs to the CN hydrolase family. Apolipoprotein N-acyltransferase subfamily.

It localises to the cell inner membrane. The catalysed reaction is N-terminal S-1,2-diacyl-sn-glyceryl-L-cysteinyl-[lipoprotein] + a glycerophospholipid = N-acyl-S-1,2-diacyl-sn-glyceryl-L-cysteinyl-[lipoprotein] + a 2-acyl-sn-glycero-3-phospholipid + H(+). Its pathway is protein modification; lipoprotein biosynthesis (N-acyl transfer). Catalyzes the phospholipid dependent N-acylation of the N-terminal cysteine of apolipoprotein, the last step in lipoprotein maturation. The sequence is that of Apolipoprotein N-acyltransferase from Rickettsia prowazekii (strain Madrid E).